The following is a 462-amino-acid chain: Arginine biosynthesis bifunctional protein ArgJ, mitochondrial (462 aa).

Positions 200, 228, 239, 326, 457, and 462 each coordinate substrate. The active-site Nucleophile is Thr239.

The protein belongs to the ArgJ family. In terms of assembly, heterodimer of an alpha and a beta chain. The alpha and beta chains are autoproteolytically processed from a single precursor protein within the mitochondrion.

The protein resides in the mitochondrion matrix. The catalysed reaction is N(2)-acetyl-L-ornithine + L-glutamate = N-acetyl-L-glutamate + L-ornithine. It catalyses the reaction L-glutamate + acetyl-CoA = N-acetyl-L-glutamate + CoA + H(+). It functions in the pathway amino-acid biosynthesis; L-arginine biosynthesis; L-ornithine and N-acetyl-L-glutamate from L-glutamate and N(2)-acetyl-L-ornithine (cyclic): step 1/1. It participates in amino-acid biosynthesis; L-arginine biosynthesis; N(2)-acetyl-L-ornithine from L-glutamate: step 1/4. In terms of biological role, catalyzes two activities which are involved in the cyclic version of arginine biosynthesis: the synthesis of acetylglutamate from glutamate and acetyl-CoA, and of ornithine by transacetylation between acetylornithine and glutamate. The protein is Arginine biosynthesis bifunctional protein ArgJ, mitochondrial of Pyrenophora tritici-repentis (strain Pt-1C-BFP) (Wheat tan spot fungus).